The primary structure comprises 332 residues: NADH-quinone oxidoreductase subunit H (332 aa).

Transmembrane regions (helical) follow at residues 8–28 (IIECILKIIVVLLIFSALAGF), 44–66 (IGPNYVGPYGLLQVVADGIKLFA), 78–98 (PIFILAPSIAAITAFIAMAPI), 120–140 (VGILFVLAVSSCGIYAPLLAG), 157–177 (IQFLSFEVITILSLLAPLMII), 196–216 (WLIFKQPLAFGLFIIAAYVEL), 245–265 (MFFIGEYANMFATAFILSLVF), 274–294 (FIPGGIAILLKVCFFIFLFMW), and 312–332 (WKIMLPLALLNVLITGCILLF).

Belongs to the complex I subunit 1 family. In terms of assembly, NDH-1 is composed of 14 different subunits. Subunits NuoA, H, J, K, L, M, N constitute the membrane sector of the complex.

The protein localises to the cell inner membrane. The catalysed reaction is a quinone + NADH + 5 H(+)(in) = a quinol + NAD(+) + 4 H(+)(out). In terms of biological role, NDH-1 shuttles electrons from NADH, via FMN and iron-sulfur (Fe-S) centers, to quinones in the respiratory chain. The immediate electron acceptor for the enzyme in this species is believed to be ubiquinone. Couples the redox reaction to proton translocation (for every two electrons transferred, four hydrogen ions are translocated across the cytoplasmic membrane), and thus conserves the redox energy in a proton gradient. This subunit may bind ubiquinone. The protein is NADH-quinone oxidoreductase subunit H of Helicobacter hepaticus (strain ATCC 51449 / 3B1).